Reading from the N-terminus, the 1679-residue chain is GRIP and coiled-coil domain-containing protein 2 (1679 aa).

Methionine 1 carries the N-acetylmethionine modification. Disordered stretches follow at residues 1–23 (MEDS…KLET) and 1466–1522 (LKSE…SAGT). A coiled-coil region spans residues 35-1469 (KQMMLLQKAK…ETQLFQLKSE (1435 aa)). 2 positions are modified to phosphoserine: serine 1474 and serine 1478. Residues 1474-1483 (SPASSHQPSK) show a composition bias toward polar residues. Positions 1569 to 1608 (HLNGLLRETEATNAILMEQIKLLKSEIRRLERNQEREKSV) are mediates interaction with RAB6A. Positions 1569–1679 (HLNGLLRETE…SYLHSWSGLR (111 aa)) are mediates interaction with RAB9A. One can recognise a GRIP domain in the interval 1604-1654 (REKSVANLEYLKNVLLRFIFLKPGSERERLLPVIDTMLQLSPEEKGKLATV).

As to quaternary structure, homodimer. Interacts (via GRIP domain) with RAB6A (preferentially in its GTP-bound form). May interact (RAB6A-dependent) with ARL1; might be involved in GCC2 Golgi localization. Interacts with CLASP1 and CLASP2; recruits both proteins to membranes of the TGN. Interacts with STX16. Interacts (probably via GRIP domain) with RAB9A (preferentially in its GTP-bound form).

It is found in the cytoplasm. Its subcellular location is the golgi apparatus. It localises to the trans-Golgi network membrane. Its function is as follows. Golgin which probably tethers transport vesicles to the trans-Golgi network (TGN) and regulates vesicular transport between the endosomes and the Golgi. As a RAB9A effector it is involved in recycling of the mannose 6-phosphate receptor from the late endosomes to the TGN. May also play a role in transport between the recycling endosomes and the Golgi. Required for maintenance of the Golgi structure, it is involved in the biogenesis of noncentrosomal, Golgi-associated microtubules through recruitment of CLASP1 and CLASP2. The chain is GRIP and coiled-coil domain-containing protein 2 (Gcc2) from Rattus norvegicus (Rat).